We begin with the raw amino-acid sequence, 460 residues long: V-type ATP synthase beta chain (460 aa).

This sequence belongs to the ATPase alpha/beta chains family.

Functionally, produces ATP from ADP in the presence of a proton gradient across the membrane. The V-type beta chain is a regulatory subunit. This is V-type ATP synthase beta chain from Clostridium perfringens (strain ATCC 13124 / DSM 756 / JCM 1290 / NCIMB 6125 / NCTC 8237 / Type A).